Here is a 480-residue protein sequence, read N- to C-terminus: MAVSSSSFLSTASLTNSKSNISFASSVSPSLRSVVFRSTTPATSHRRSMTVRSKIREIFMPALSSTMTEGKIVSWIKTEGEKLAKGESVVVVESDKADMDVETFYDGYLAAIVVGEGETAPVGAAIGLLAETEAEIEEAKSKAASKSSSSVAEAVVPSPPPVTSSPAPAIAQPAPVTAVSDGPRKTVATPYAKKLAKQHKVDIESVAGTGPFGRITASDVETAAGIAPSKSSIAPPPPPPPPVTAKATTTNLPPLLPDSSIVPFTAMQSAVSKNMIESLSVPTFRVGYPVNTDALDALYEKVKPKGVTMTALLAKAAGMALAQHPVVNASCKDGKSFSYNSSINIAVAVAINGGLITPVLQDADKLDLYLLSQKWKELVGKARSKQLQPHEYNSGTFTLSNLGMFGVDRFDAILPPGQGAIMAVGASKPTVVADKDGFFSVKNTMLVNVTADHRIVYGADLAAFLQTFAKIIENPDSLTL.

The N-terminal 53 residues, 1 to 53 (MAVSSSSFLSTASLTNSKSNISFASSVSPSLRSVVFRSTTPATSHRRSMTVRS), are a transit peptide targeting the chloroplast. Positions 55-133 (IREIFMPALS…AAIGLLAETE (79 aa)) constitute a Lipoyl-binding domain. Lys-96 carries the post-translational modification N6-lipoyllysine. 2 disordered regions span residues 140–168 (KSKA…SPAP) and 224–245 (AGIA…PVTA). A compositionally biased stretch (low complexity) spans 142–156 (KAASKSSSSVAEAVV). In terms of domain architecture, Peripheral subunit-binding (PSBD) spans 187–224 (VATPYAKKLAKQHKVDIESVAGTGPFGRITASDVETAA). Residues 234-243 (APPPPPPPPV) show a composition bias toward pro residues. The active site involves His-453.

The protein belongs to the 2-oxoacid dehydrogenase family. (R)-lipoate serves as cofactor.

The protein resides in the plastid. It localises to the chloroplast stroma. It carries out the reaction N(6)-[(R)-dihydrolipoyl]-L-lysyl-[protein] + acetyl-CoA = N(6)-[(R)-S(8)-acetyldihydrolipoyl]-L-lysyl-[protein] + CoA. Its function is as follows. The pyruvate dehydrogenase complex catalyzes the overall conversion of pyruvate to acetyl-CoA and CO(2). It contains multiple copies of three enzymatic components: pyruvate dehydrogenase (E1), dihydrolipoamide acetyltransferase (E2) and lipoamide dehydrogenase (E3). This is Dihydrolipoyllysine-residue acetyltransferase component 4 of pyruvate dehydrogenase complex, chloroplastic (LTA2) from Arabidopsis thaliana (Mouse-ear cress).